The primary structure comprises 161 residues: uncharacterized protein (161 aa).

The span at 1–10 (MSKQQEQDTP) shows a compositional bias: polar residues. 3 disordered regions span residues 1–20 (MSKQ…QRLQ), 55–84 (KKTR…MSDE), and 118–161 (LLQQ…ANNS). The stretch at 82–107 (SDEEYARQLQEEMDRLDASIQMDKEA) forms a coiled coil. Low complexity predominate over residues 144–161 (QQSSNTTTSSSCQSANNS).

This is an uncharacterized protein from Caenorhabditis elegans.